A 75-amino-acid chain; its full sequence is U6-lycotoxin-Ls1g (75 aa).

The N-terminal stretch at 1 to 21 (MKLLLFTALVLVVISLIEVEA) is a signal peptide. Positions 22–25 (ENER) are excised as a propeptide.

Belongs to the neurotoxin 19 (CSTX) family. 06 (U6-Lctx) subfamily. Post-translationally, contains 4 disulfide bonds. As to expression, expressed by the venom gland.

It is found in the secreted. This chain is U6-lycotoxin-Ls1g, found in Lycosa singoriensis (Wolf spider).